Consider the following 370-residue polypeptide: MYNLSSIIRRKSTRIYVGKVPIGENAPISVQSMTNTKTTDVAATVAQIKALQSVGADIVRVSVPTMEAAEAFNQIKQQASVPLVADIHFDYRIALKVAEYGVDCLRINPGNIGSELRIRDVVASARHHGIPIRIGINGGSLEKDIQEKYKEPTPEALLESAMRQVSFLERLNFDQFKISVKASDVFLAIHSYRLLATRIDQPLHLGITEAGGARSGSIKSAIGLGILLSEGIGDTLRISLAADPTEEIKAGFDILKSLRIRSRGINFIACPTCSRQEFDVIGTVNALEKRLEDIVTPMDVSIIGCVVNGPGEALVSTLGVTGARNKSGFFEEGERKGRLDNQQIIDQLEAKIRAKAALLDKKNRIQINQL.

Cysteine 270, cysteine 273, cysteine 305, and glutamate 312 together coordinate [4Fe-4S] cluster.

The protein belongs to the IspG family. [4Fe-4S] cluster serves as cofactor.

It catalyses the reaction (2E)-4-hydroxy-3-methylbut-2-enyl diphosphate + oxidized [flavodoxin] + H2O + 2 H(+) = 2-C-methyl-D-erythritol 2,4-cyclic diphosphate + reduced [flavodoxin]. Its pathway is isoprenoid biosynthesis; isopentenyl diphosphate biosynthesis via DXP pathway; isopentenyl diphosphate from 1-deoxy-D-xylulose 5-phosphate: step 5/6. In terms of biological role, converts 2C-methyl-D-erythritol 2,4-cyclodiphosphate (ME-2,4cPP) into 1-hydroxy-2-methyl-2-(E)-butenyl 4-diphosphate. The sequence is that of 4-hydroxy-3-methylbut-2-en-1-yl diphosphate synthase (flavodoxin) from Hamiltonella defensa subsp. Acyrthosiphon pisum (strain 5AT).